Here is a 373-residue protein sequence, read N- to C-terminus: RNA 3'-terminal phosphate cyclase-like protein (373 aa).

The protein belongs to the RNA 3'-terminal cyclase family. Type 2 subfamily. Part of the small subunit (SSU) processome, composed of more than 70 proteins and the RNA chaperone small nucleolar RNA (snoRNA) U3. Interacts with BMS1.

The protein localises to the nucleus. The protein resides in the nucleolus. Its function is as follows. As part of the small subunit (SSU) processome, it plays a role in 40S-ribosomal-subunit biogenesis in the early pre-rRNA processing steps at sites A0, A1 and A2 that are required for proper maturation of the 18S RNA. Activates BMS1 by promoting GDP/GTP exchange. Does not have cyclase activity. This Bos taurus (Bovine) protein is RNA 3'-terminal phosphate cyclase-like protein (RCL1).